The primary structure comprises 245 residues: tRNA (guanine-N(1)-)-methyltransferase (245 aa).

S-adenosyl-L-methionine is bound by residues glycine 111 and 131–136; that span reads MGDYVL.

Belongs to the RNA methyltransferase TrmD family. Homodimer.

It is found in the cytoplasm. The catalysed reaction is guanosine(37) in tRNA + S-adenosyl-L-methionine = N(1)-methylguanosine(37) in tRNA + S-adenosyl-L-homocysteine + H(+). In terms of biological role, specifically methylates guanosine-37 in various tRNAs. In Staphylococcus aureus (strain MRSA252), this protein is tRNA (guanine-N(1)-)-methyltransferase.